The sequence spans 270 residues: Probable feruloyl esterase C (270 aa).

Positions 1–22 (MAILSRLLTTVTLGSLLTSAVA) are cleaved as a signal peptide.

The protein belongs to the faeC family.

The protein localises to the secreted. It catalyses the reaction feruloyl-polysaccharide + H2O = ferulate + polysaccharide.. In terms of biological role, involved in degradation of plant cell walls. Hydrolyzes the feruloyl-arabinose ester bond in arabinoxylans, and the feruloyl-galactose ester bond in pectin. Active against paranitrophenyl-acetate, methyl ferulate and wheat arabinoxylan. In Aspergillus terreus (strain NIH 2624 / FGSC A1156), this protein is Probable feruloyl esterase C (faeC).